A 322-amino-acid polypeptide reads, in one-letter code: Eukaryotic translation initiation factor 3 subunit I (322 aa).

WD repeat units lie at residues 4–43 (GHER…RLGT), 46–85 (GHQG…VIAS), 141–180 (MTES…KVVD), 184–223 (DHSA…CLKS), and 281–322 (GHFG…NIFE).

Belongs to the eIF-3 subunit I family. Component of the eukaryotic translation initiation factor 3 (eIF-3) complex. The eIF-3 complex interacts with pix.

The protein localises to the cytoplasm. In terms of biological role, component of the eukaryotic translation initiation factor 3 (eIF-3) complex, which is involved in protein synthesis of a specialized repertoire of mRNAs and, together with other initiation factors, stimulates binding of mRNA and methionyl-tRNAi to the 40S ribosome. The eIF-3 complex specifically targets and initiates translation of a subset of mRNAs involved in cell proliferation. The protein is Eukaryotic translation initiation factor 3 subunit I of Drosophila yakuba (Fruit fly).